Here is a 322-residue protein sequence, read N- to C-terminus: Ferredoxin--NADP reductase (322 aa).

The FAD site is built by aspartate 34, glutamine 42, tyrosine 47, valine 87, phenylalanine 120, aspartate 279, and threonine 320.

It belongs to the ferredoxin--NADP reductase type 2 family. In terms of assembly, homodimer. It depends on FAD as a cofactor.

The enzyme catalyses 2 reduced [2Fe-2S]-[ferredoxin] + NADP(+) + H(+) = 2 oxidized [2Fe-2S]-[ferredoxin] + NADPH. In Streptococcus pneumoniae serotype 19F (strain G54), this protein is Ferredoxin--NADP reductase.